Consider the following 375-residue polypeptide: Coproporphyrin III ferrochelatase (375 aa).

Fe-coproporphyrin III contacts are provided by S59 and Y128. Fe(2+)-binding residues include H191 and E286.

This sequence belongs to the ferrochelatase family.

It is found in the cytoplasm. It catalyses the reaction Fe-coproporphyrin III + 2 H(+) = coproporphyrin III + Fe(2+). It participates in porphyrin-containing compound metabolism; protoheme biosynthesis. In terms of biological role, involved in coproporphyrin-dependent heme b biosynthesis. Catalyzes the insertion of ferrous iron into coproporphyrin III to form Fe-coproporphyrin III. This is Coproporphyrin III ferrochelatase from Streptomyces coelicolor (strain ATCC BAA-471 / A3(2) / M145).